Consider the following 151-residue polypeptide: MTSLLLFGAGGLFDFDATLPLMALQVVLLTFILNALFFRPVGRVVEEREVYVTTSRAEAKQKLAEAEKLELELKEQLKSARIAAQQLIQEAEKDSEQLYREALAIANADANAAREKARREIDAQRDSALSQLKGDAEKLGDLIVNRLLAAK.

Residues 18-38 (TLPLMALQVVLLTFILNALFF) form a helical membrane-spanning segment.

This sequence belongs to the ATPase B chain family. As to quaternary structure, F-type ATPases have 2 components, F(1) - the catalytic core - and F(0) - the membrane proton channel. F(1) has five subunits: alpha(3), beta(3), gamma(1), delta(1), epsilon(1). F(0) has four main subunits: a(1), b(1), b'(1) and c(10-14). The alpha and beta chains form an alternating ring which encloses part of the gamma chain. F(1) is attached to F(0) by a central stalk formed by the gamma and epsilon chains, while a peripheral stalk is formed by the delta, b and b' chains.

It is found in the cellular thylakoid membrane. In terms of biological role, f(1)F(0) ATP synthase produces ATP from ADP in the presence of a proton or sodium gradient. F-type ATPases consist of two structural domains, F(1) containing the extramembraneous catalytic core and F(0) containing the membrane proton channel, linked together by a central stalk and a peripheral stalk. During catalysis, ATP synthesis in the catalytic domain of F(1) is coupled via a rotary mechanism of the central stalk subunits to proton translocation. Component of the F(0) channel, it forms part of the peripheral stalk, linking F(1) to F(0). The b'-subunit is a diverged and duplicated form of b found in plants and photosynthetic bacteria. This Prochlorococcus marinus (strain MIT 9313) protein is ATP synthase subunit b'.